The primary structure comprises 951 residues: Valine--tRNA ligase (951 aa).

Positions 42–52 (PNVTGSLHMGH) match the 'HIGH' region motif. The short motif at 554–558 (KMSKS) is the 'KMSKS' region element. An ATP-binding site is contributed by K557. Residues 880 to 944 (AGLINKEDEL…AEAKAKLIEQ (65 aa)) adopt a coiled-coil conformation.

It belongs to the class-I aminoacyl-tRNA synthetase family. ValS type 1 subfamily. Monomer.

It is found in the cytoplasm. The enzyme catalyses tRNA(Val) + L-valine + ATP = L-valyl-tRNA(Val) + AMP + diphosphate. Catalyzes the attachment of valine to tRNA(Val). As ValRS can inadvertently accommodate and process structurally similar amino acids such as threonine, to avoid such errors, it has a 'posttransfer' editing activity that hydrolyzes mischarged Thr-tRNA(Val) in a tRNA-dependent manner. This is Valine--tRNA ligase from Escherichia coli O6:H1 (strain CFT073 / ATCC 700928 / UPEC).